A 146-amino-acid chain; its full sequence is Large ribosomal subunit protein uL15 (146 aa).

The segment covering Met1–Glu10 has biased composition (basic and acidic residues). The segment at Met1–Glu51 is disordered. Composition is skewed to gly residues over residues Thr23–Gln35 and Ser42–Glu51.

It belongs to the universal ribosomal protein uL15 family. As to quaternary structure, part of the 50S ribosomal subunit.

Its function is as follows. Binds to the 23S rRNA. The chain is Large ribosomal subunit protein uL15 from Enterococcus faecalis (strain ATCC 700802 / V583).